We begin with the raw amino-acid sequence, 310 residues long: HTH-type transcriptional regulator CbbR (310 aa).

An HTH lysR-type domain is found at 7–64; sequence ITLKQLRALVAVAGSASLTGGATRLGLTPPAIHSQIRNLEEAFGVPLLHRPPETGSFT. A DNA-binding region (H-T-H motif) is located at residues 24-43; sequence LTGGATRLGLTPPAIHSQIR.

The protein belongs to the LysR transcriptional regulatory family.

Transcriptional activator for the cbb operon for RuBisCO and other Calvin cycle genes. The chain is HTH-type transcriptional regulator CbbR (cbbR) from Cereibacter sphaeroides (Rhodobacter sphaeroides).